The primary structure comprises 435 residues: Adenylosuccinate synthetase (435 aa).

Residues 11–17 and 39–41 contribute to the GTP site; these read GDEGKGK and GHT. Residue D12 is the Proton acceptor of the active site. The Mg(2+) site is built by D12 and G39. Residues 12 to 15, 37 to 40, T128, R142, Q223, T238, and R302 contribute to the IMP site; these read DEGK and NAGH. The active-site Proton donor is the H40. Position 298 to 304 (298 to 304) interacts with substrate; it reads SVTGRPR. GTP-binding positions include R304, 330–332, and 412–414; these read KLD and STG.

It belongs to the adenylosuccinate synthetase family. In terms of assembly, homodimer. Mg(2+) serves as cofactor.

It localises to the cytoplasm. The catalysed reaction is IMP + L-aspartate + GTP = N(6)-(1,2-dicarboxyethyl)-AMP + GDP + phosphate + 2 H(+). It functions in the pathway purine metabolism; AMP biosynthesis via de novo pathway; AMP from IMP: step 1/2. Plays an important role in the de novo pathway of purine nucleotide biosynthesis. Catalyzes the first committed step in the biosynthesis of AMP from IMP. The sequence is that of Adenylosuccinate synthetase from Coxiella burnetii (strain Dugway 5J108-111).